The primary structure comprises 88 residues: Putative regulatory protein PCC7424_3427 (88 aa).

It belongs to the RemA family.

The chain is Putative regulatory protein PCC7424_3427 from Gloeothece citriformis (strain PCC 7424) (Cyanothece sp. (strain PCC 7424)).